The following is a 154-amino-acid chain: Large ribosomal subunit protein uL13 (154 aa).

This sequence belongs to the universal ribosomal protein uL13 family. Part of the 50S ribosomal subunit.

Its function is as follows. This protein is one of the early assembly proteins of the 50S ribosomal subunit, although it is not seen to bind rRNA by itself. It is important during the early stages of 50S assembly. The protein is Large ribosomal subunit protein uL13 of Brucella canis (strain ATCC 23365 / NCTC 10854 / RM-666).